The chain runs to 348 residues: Probable dual-specificity RNA methyltransferase RlmN (348 aa).

E89 acts as the Proton acceptor in catalysis. A Radical SAM core domain is found at 95 to 328 (HKNRNTVCVS…VTLRISYGSK (234 aa)). A disulfide bridge links C102 with C333. [4Fe-4S] cluster contacts are provided by C109, C113, and C116. Residues 159–160 (GE), S191, 214–216 (SLH), and N290 each bind S-adenosyl-L-methionine. Catalysis depends on C333, which acts as the S-methylcysteine intermediate.

Belongs to the radical SAM superfamily. RlmN family. [4Fe-4S] cluster is required as a cofactor.

It is found in the cytoplasm. It catalyses the reaction adenosine(2503) in 23S rRNA + 2 reduced [2Fe-2S]-[ferredoxin] + 2 S-adenosyl-L-methionine = 2-methyladenosine(2503) in 23S rRNA + 5'-deoxyadenosine + L-methionine + 2 oxidized [2Fe-2S]-[ferredoxin] + S-adenosyl-L-homocysteine. It carries out the reaction adenosine(37) in tRNA + 2 reduced [2Fe-2S]-[ferredoxin] + 2 S-adenosyl-L-methionine = 2-methyladenosine(37) in tRNA + 5'-deoxyadenosine + L-methionine + 2 oxidized [2Fe-2S]-[ferredoxin] + S-adenosyl-L-homocysteine. Specifically methylates position 2 of adenine 2503 in 23S rRNA and position 2 of adenine 37 in tRNAs. This Dictyoglomus turgidum (strain DSM 6724 / Z-1310) protein is Probable dual-specificity RNA methyltransferase RlmN.